Consider the following 282-residue polypeptide: Succinate dehydrogenase [ubiquinone] iron-sulfur subunit, mitochondrial (282 aa).

A 2Fe-2S ferredoxin-type domain is found at 43-131 (YRFNPEAPGA…STKIYPLPHM (89 aa)). [2Fe-2S] cluster-binding residues include cysteine 91, cysteine 96, cysteine 99, and cysteine 111. The 4Fe-4S ferredoxin-type domain maps to 174–204 (ERDRLDGLYECILCACCSTSCPSYWWNADKY). 3 residues coordinate [4Fe-4S] cluster: cysteine 184, cysteine 187, and cysteine 190. Cysteine 194 lines the [3Fe-4S] cluster pocket. Tryptophan 199 contacts a ubiquinone. 2 residues coordinate [3Fe-4S] cluster: cysteine 241 and cysteine 247. Cysteine 251 serves as a coordination point for [4Fe-4S] cluster.

Belongs to the succinate dehydrogenase/fumarate reductase iron-sulfur protein family. Component of complex II composed of four subunits: a flavoprotein (FP), an iron-sulfur protein (IP), and a cytochrome b composed of a large and a small subunit. [2Fe-2S] cluster is required as a cofactor. [3Fe-4S] cluster serves as cofactor. The cofactor is [4Fe-4S] cluster.

Its subcellular location is the mitochondrion inner membrane. The enzyme catalyses a quinone + succinate = fumarate + a quinol. Its pathway is carbohydrate metabolism; tricarboxylic acid cycle; fumarate from succinate (eukaryal route): step 1/1. Iron-sulfur protein (IP) subunit of succinate dehydrogenase (SDH) that is involved in complex II of the mitochondrial electron transport chain and is responsible for transferring electrons from succinate to ubiquinone (coenzyme Q). This is Succinate dehydrogenase [ubiquinone] iron-sulfur subunit, mitochondrial from Caenorhabditis briggsae.